Consider the following 142-residue polypeptide: Small heat shock protein IbpB (142 aa).

One can recognise a sHSP domain in the interval 26–137 (AGESQSFPPY…AAQRIAISER (112 aa)).

This sequence belongs to the small heat shock protein (HSP20) family. Homodimer. Forms homomultimers of about 100-150 subunits at optimal growth temperatures. Conformation changes to oligomers at high temperatures or high ionic concentrations. The decrease in size of the multimers is accompanied by an increase in chaperone activity.

The protein resides in the cytoplasm. Functionally, associates with aggregated proteins, together with IbpA, to stabilize and protect them from irreversible denaturation and extensive proteolysis during heat shock and oxidative stress. Aggregated proteins bound to the IbpAB complex are more efficiently refolded and reactivated by the ATP-dependent chaperone systems ClpB and DnaK/DnaJ/GrpE. Its activity is ATP-independent. This Escherichia coli O7:K1 (strain IAI39 / ExPEC) protein is Small heat shock protein IbpB.